The chain runs to 363 residues: Pyruvate dehydrogenase E1 component subunit alpha, mitochondrial (363 aa).

A mitochondrion-targeting transit peptide spans 1 to 2 (RN). N6-acetyllysine; alternate is present on Lys-36. Lys-36 is subject to N6-succinyllysine; alternate. Residues His-65, Tyr-91, Arg-92, Ala-130, Gly-138, Val-140, Asp-169, Gly-170, Ala-171, Asn-198, and Tyr-200 each coordinate pyruvate. Thiamine diphosphate contacts are provided by Tyr-91 and Arg-92. The thiamine diphosphate site is built by Gly-138, Val-140, Asp-169, Gly-170, Ala-171, and Asn-198. Position 169 (Asp-169) interacts with Mg(2+). Mg(2+) is bound by residues Asn-198 and Tyr-200. Ser-205 is subject to Phosphoserine; by PDK1. N6-acetyllysine; alternate is present on Lys-217. Lys-217 is modified (N6-succinyllysine; alternate). N6-acetyllysine is present on Lys-240. Lys-250 is modified (N6-succinyllysine). A thiamine diphosphate-binding site is contributed by His-265. The residue at position 266 (Ser-266) is a Phosphoserine; by PDK1, PDK2, PDK3 and PDK4. Ser-268 is subject to Phosphoserine. Ser-273 is subject to Phosphoserine; by PDK1, PDK2, PDK3 and PDK4. At Tyr-274 the chain carries Phosphotyrosine. Lys-286 bears the N6-acetyllysine; alternate mark. Lys-286 is modified (N6-succinyllysine; alternate). N6-acetyllysine occurs at positions 294 and 309. The residue at position 358 (Lys-358) is an N6-succinyllysine.

In terms of assembly, heterotetramer of two PDHA1 and two PDHB subunits. The heterotetramer interacts with DLAT, and is part of the multimeric pyruvate dehydrogenase complex that contains multiple copies of pyruvate dehydrogenase (E1), dihydrolipoamide acetyltransferase (DLAT, E2) and lipoamide dehydrogenase (DLD, E3). These subunits are bound to an inner core composed of about 48 DLAT and 12 PDHX molecules. Requires thiamine diphosphate as cofactor. Mg(2+) serves as cofactor. Post-translationally, phosphorylation at Ser-205, Ser-266 and Ser-273 by PDK family kinases inactivates the enzyme; for this phosphorylation at a single site is sufficient. Phosphorylation at Ser-266 interferes with access to active site, and thereby inactivates the enzyme. Dephosphorylation at all three sites, i.e. at Ser-205, Ser-266 and Ser-273, is required for reactivation. Acetylation alters the phosphorylation pattern. Deacetylated by SIRT3.

The protein resides in the mitochondrion matrix. The enzyme catalyses N(6)-[(R)-lipoyl]-L-lysyl-[protein] + pyruvate + H(+) = N(6)-[(R)-S(8)-acetyldihydrolipoyl]-L-lysyl-[protein] + CO2. With respect to regulation, pyruvate dehydrogenase activity is inhibited by phosphorylation of PDHA1; it is reactivated by dephosphorylation. Functionally, the pyruvate dehydrogenase complex catalyzes the overall conversion of pyruvate to acetyl-CoA and CO(2), and thereby links the glycolytic pathway to the tricarboxylic cycle. The protein is Pyruvate dehydrogenase E1 component subunit alpha, mitochondrial (PDHA) of Sminthopsis macroura (Stripe-faced dunnart).